Reading from the N-terminus, the 130-residue chain is Small ribosomal subunit protein uS11 (130 aa).

It belongs to the universal ribosomal protein uS11 family. Part of the 30S ribosomal subunit. Interacts with proteins S7 and S18. Binds to IF-3.

Its function is as follows. Located on the platform of the 30S subunit, it bridges several disparate RNA helices of the 16S rRNA. Forms part of the Shine-Dalgarno cleft in the 70S ribosome. The protein is Small ribosomal subunit protein uS11 of Xylella fastidiosa (strain M23).